We begin with the raw amino-acid sequence, 729 residues long: MPQPIFDRILPAFLYERIATVLLAQASRRGATVLTREEVIASTDAPFLIVVAESFALLLQAEPVPQMSTYRVAILTNPRAIARFLRKIRSQVPVNRRPLIRAVLQQLSPLNAKEQMLPADLAIALMAVLGEETTAQCQSCQPLVTAALNERQAQERLLHQVTTQIRQSLELPELLKIAVDRIREFLDVDRLLVGQFAQTEGELRGQITYESCRNSEIPSVLGIWDDCWQWSGLPSSSYQRLSQGEAIVVSDIQQFYGAVPCLQSFAAHWQIKSWLIVPIIVQDRLWGVLIAHQCDRPRQWQPQEVEFLTHLSQHLSIAIYQAQLYSELQQQKATLEQRVNERTQALREALSAMEAAHRIKNDFLATMSHELRTPLTCVIGVSATLLRWPLGPLTAKQREYLEIIHESGTHLLELINSILDLSEAELGRSQLHRSAFSIRQLCADCLEVVKPQAHRHQVNLRHQLMIPPTRDRFWGDYRRIQQILINLLSNAIKFTPAMGEVILRAWWKEDELIFQVQDTGIGIPAHLQSLLFQKFQQLDSSFGRAYTGAGLGLALTKQWVDLHHGWIDVDSTEGKGSTFTVGLPAISDPLPDPPKPKLDVPPLATTEVLVEPEGRIVLVSEDEATSTLICSILTTAGYQVIWLVDGEVERLLALTPIAVLLAEPFSYGDVQELVDQLRQRCTPEQLKIFILGSKGNYQGVDRYIPLPIHPESFLQQVTMGLTSLATSAQ.

The tract at residues 1–169 (MPQPIFDRIL…QVTTQIRQSL (169 aa)) is N-terminal domain. Residues 170–314 (ELPELLKIAV…VEFLTHLSQH (145 aa)) are GAF domain. Residues 366 to 587 (TMSHELRTPL…TFTVGLPAIS (222 aa)) form the Histidine kinase domain. At H369 the chain carries Phosphohistidine; by autocatalysis. A psR domain, binds KaiB region spans residues 613 to 729 (EGRIVLVSED…GLTSLATSAQ (117 aa)).

It in the N-terminal section; belongs to the phytochrome family. In terms of assembly, homodimer. Part of the circadian clock (KaiA, KaiB, KaiC, CikA, RpaA, SasA), the composition of which varies during the circadian cycle. KaiA and CikA compete for binding to KaiB(fs). The PsR domain binds the KaiB:KaiC CI complex but poorly to either protein alone. KaiA and CikA bind to the same region of the KaiB(fs) form and therefore compete.

It carries out the reaction ATP + protein L-histidine = ADP + protein N-phospho-L-histidine.. Its function is as follows. Functions in an input pathway to the Kai circadian clock. Senses oxidized quinones via its C-terminal pseudo-receiver domain, providing a link between cell metabolism and the clock. Affects the ratio of phosphorylated to unphosphorylated KaiC, binds quinones via its pseudo-receptor domain. Quinone-binding destabilizes the protein rapidly. Autophosphorylates, does not transfer the phosphate to its pseudo-receiver (PsR) domain. May play a role in cell division. Functionally, also functions in a two-component CikA/RpaA output pathway from the circadian clock, negatively regulating kaiBC expression independently of labA and of sasA. One of three clock output pathways. Dephosphorylates phospho-RpaA, enhanced by KaiB and KaiC, has only modest kinase activity on RpaA. The polypeptide is Circadian input-output histidine kinase CikA (Thermosynechococcus vestitus (strain NIES-2133 / IAM M-273 / BP-1)).